A 242-amino-acid chain; its full sequence is ATP synthase subunit a (242 aa).

Transmembrane regions (helical) follow at residues 21–41 (LSSILMILVTAFLVFLLAIIC), 83–103 (AVTLILYIFIANMLGLPFSIV), 117–137 (DATVTLTLSTTIILLTHFYGI), 175–195 (LYGNIFAGEILLTLLAGLFFN), and 198–218 (AWGWIISIPGLIVWQAFSIFV).

Belongs to the ATPase A chain family. In terms of assembly, F-type ATPases have 2 components, CF(1) - the catalytic core - and CF(0) - the membrane proton channel. CF(1) has five subunits: alpha(3), beta(3), gamma(1), delta(1), epsilon(1). CF(0) has three main subunits: a(1), b(2) and c(9-12). The alpha and beta chains form an alternating ring which encloses part of the gamma chain. CF(1) is attached to CF(0) by a central stalk formed by the gamma and epsilon chains, while a peripheral stalk is formed by the delta and b chains.

It localises to the cell membrane. Functionally, key component of the proton channel; it plays a direct role in the translocation of protons across the membrane. This Staphylococcus aureus (strain Newman) protein is ATP synthase subunit a.